Here is a 362-residue protein sequence, read N- to C-terminus: Aminomethyltransferase (362 aa).

Belongs to the GcvT family. As to quaternary structure, the glycine cleavage system is composed of four proteins: P, T, L and H.

The catalysed reaction is N(6)-[(R)-S(8)-aminomethyldihydrolipoyl]-L-lysyl-[protein] + (6S)-5,6,7,8-tetrahydrofolate = N(6)-[(R)-dihydrolipoyl]-L-lysyl-[protein] + (6R)-5,10-methylene-5,6,7,8-tetrahydrofolate + NH4(+). In terms of biological role, the glycine cleavage system catalyzes the degradation of glycine. The protein is Aminomethyltransferase of Chloroherpeton thalassium (strain ATCC 35110 / GB-78).